Reading from the N-terminus, the 542-residue chain is Putative CTP synthase (542 aa).

Positions 1–277 (MEIDLMKHIQ…HKTILDFFSL (277 aa)) are amidoligase domain. Serine 23 is a CTP binding site. Serine 23 provides a ligand contact to UTP. ATP-binding positions include 24–29 (SLGKGV) and aspartate 81. Mg(2+) contacts are provided by aspartate 81 and glutamate 151. Residues 158-160 (DIE), 198-203 (KTKPTQ), and lysine 234 each bind CTP. Residues 198–203 (KTKPTQ) and lysine 234 each bind UTP. Residues 310 to 542 (YVELPDAYKS…LKMSLKIKES (233 aa)) form the Glutamine amidotransferase type-1 domain. Glutamate 517 is a catalytic residue.

Belongs to the CTP synthase family. Homotetramer.

It catalyses the reaction UTP + L-glutamine + ATP + H2O = CTP + L-glutamate + ADP + phosphate + 2 H(+). The enzyme catalyses L-glutamine + H2O = L-glutamate + NH4(+). It carries out the reaction UTP + NH4(+) + ATP = CTP + ADP + phosphate + 2 H(+). It functions in the pathway pyrimidine metabolism; CTP biosynthesis via de novo pathway; CTP from UDP: step 2/2. With respect to regulation, allosterically activated by GTP, when glutamine is the substrate; GTP has no effect on the reaction when ammonia is the substrate. The allosteric effector GTP functions by stabilizing the protein conformation that binds the tetrahedral intermediate(s) formed during glutamine hydrolysis. Inhibited by the product CTP, via allosteric rather than competitive inhibition. Its function is as follows. Catalyzes the ATP-dependent amination of UTP to CTP with either L-glutamine or ammonia as the source of nitrogen. Regulates intracellular CTP levels through interactions with the four ribonucleotide triphosphates. In Ureaplasma parvum serovar 3 (strain ATCC 700970), this protein is Putative CTP synthase.